The following is a 310-amino-acid chain: tRNA dimethylallyltransferase (310 aa).

14-21 (GPTASGKT) provides a ligand contact to ATP. 16–21 (TASGKT) serves as a coordination point for substrate. Interaction with substrate tRNA stretches follow at residues 39-42 (DSAL), 163-167 (QRLSR), and 244-249 (RCVGYR).

Belongs to the IPP transferase family. As to quaternary structure, monomer. Mg(2+) is required as a cofactor.

The catalysed reaction is adenosine(37) in tRNA + dimethylallyl diphosphate = N(6)-dimethylallyladenosine(37) in tRNA + diphosphate. In terms of biological role, catalyzes the transfer of a dimethylallyl group onto the adenine at position 37 in tRNAs that read codons beginning with uridine, leading to the formation of N6-(dimethylallyl)adenosine (i(6)A). The chain is tRNA dimethylallyltransferase from Aeromonas salmonicida (strain A449).